The following is a 494-amino-acid chain: Argininosuccinate synthase, chloroplastic (494 aa).

A chloroplast-targeting transit peptide spans 1–73 (MAEISATSFP…SRSCKNQAIR (73 aa)). At A74 the chain carries N-acetylalanine. Residues 102-110 (AYSGGLDTS) and A129 contribute to the ATP site. Y181 and S186 together coordinate L-citrulline. G211 is a binding site for ATP. Residues T213, N217, and D218 each contribute to the L-aspartate site. N217 is an L-citrulline binding site. Residues R221, S270, S279, E355, and Y367 each contribute to the L-citrulline site.

Belongs to the argininosuccinate synthase family. Type 1 subfamily. Homotetramer.

It is found in the plastid. The protein resides in the chloroplast. It carries out the reaction L-citrulline + L-aspartate + ATP = 2-(N(omega)-L-arginino)succinate + AMP + diphosphate + H(+). It functions in the pathway amino-acid biosynthesis; L-arginine biosynthesis; L-arginine from L-ornithine and carbamoyl phosphate: step 2/3. This chain is Argininosuccinate synthase, chloroplastic, found in Arabidopsis thaliana (Mouse-ear cress).